Reading from the N-terminus, the 125-residue chain is Small ribosomal subunit protein uS13 (125 aa).

The segment at 92-125 is disordered; sequence RRHLPVHGQRTKTNARTRKGPKKTVAGKKKAGKK.

It belongs to the universal ribosomal protein uS13 family. Part of the 30S ribosomal subunit. Forms a loose heterodimer with protein S19. Forms two bridges to the 50S subunit in the 70S ribosome.

Located at the top of the head of the 30S subunit, it contacts several helices of the 16S rRNA. In the 70S ribosome it contacts the 23S rRNA (bridge B1a) and protein L5 of the 50S subunit (bridge B1b), connecting the 2 subunits; these bridges are implicated in subunit movement. Contacts the tRNAs in the A and P-sites. This Saccharopolyspora erythraea (strain ATCC 11635 / DSM 40517 / JCM 4748 / NBRC 13426 / NCIMB 8594 / NRRL 2338) protein is Small ribosomal subunit protein uS13.